Consider the following 266-residue polypeptide: Probable septum site-determining protein MinC (266 aa).

Low complexity predominate over residues 1–21 (MSEAESTPVEEPVVESTEGSE). Residues 1 to 28 (MSEAESTPVEEPVVESTEGSEAIPEVEQ) form a disordered region.

The protein belongs to the MinC family. In terms of assembly, interacts with MinD and FtsZ.

Cell division inhibitor that blocks the formation of polar Z ring septums. Rapidly oscillates between the poles of the cell to destabilize FtsZ filaments that have formed before they mature into polar Z rings. Prevents FtsZ polymerization. The chain is Probable septum site-determining protein MinC from Thermosynechococcus vestitus (strain NIES-2133 / IAM M-273 / BP-1).